We begin with the raw amino-acid sequence, 132 residues long: Large ribosomal subunit protein uL22 (132 aa).

Belongs to the universal ribosomal protein uL22 family. Part of the 50S ribosomal subunit.

This protein binds specifically to 23S rRNA; its binding is stimulated by other ribosomal proteins, e.g. L4, L17, and L20. It is important during the early stages of 50S assembly. It makes multiple contacts with different domains of the 23S rRNA in the assembled 50S subunit and ribosome. Functionally, the globular domain of the protein is located near the polypeptide exit tunnel on the outside of the subunit, while an extended beta-hairpin is found that lines the wall of the exit tunnel in the center of the 70S ribosome. This is Large ribosomal subunit protein uL22 from Rhodospirillum centenum (strain ATCC 51521 / SW).